We begin with the raw amino-acid sequence, 273 residues long: (5R)-carbapenem-3-carboxylate synthase (273 aa).

2 residues coordinate Fe cation: His101 and Asp103. Residue Gly104 participates in substrate binding. Residue Thr130 coordinates 2-oxoglutarate. His251 provides a ligand contact to Fe cation. 3 residues coordinate 2-oxoglutarate: Arg253, Arg263, and Arg267.

This sequence belongs to the TfdA dioxygenase family. As to quaternary structure, homohexamer. Dimer of trimers. Requires Fe(2+) as cofactor.

The protein localises to the cytoplasm. It carries out the reaction (3S,5S)-carbapenam-3-caboxylate + 2-oxoglutarate + O2 = (5R)-carbapenem-3-carboxylate + succinate + CO2 + H2O. Its activity is regulated as follows. Inhibited by L-N-acetylproline and by D-N-acetylproline. Catalyzes the Fe(2+) and alpha-ketoglutarate-dependent conversion of (3S,5S)-carbapenam to (5R)-carbapenem, an essential step in carbapenem antibiotic biosynthesis. This is (5R)-carbapenem-3-carboxylate synthase (carC) from Pectobacterium carotovorum subsp. carotovorum (Erwinia carotovora subsp. carotovora).